We begin with the raw amino-acid sequence, 349 residues long: CCN family member 2 (349 aa).

Positions 1–26 (MTAASMGPVRVAFVVLLALCSRPAVG) are cleaved as a signal peptide. The 72-residue stretch at 27–98 (QNCSGPCRCP…NRKIGVCTAK (72 aa)) folds into the IGFBP N-terminal domain. The N-linked (GlcNAc...) asparagine glycan is linked to N28. 6 disulfide bridges follow: C29–C54, C33–C56, C35–C57, C43–C60, C68–C82, and C74–C95. The VWFC domain maps to 101 to 167 (APCIFGGTVY…GKCCEEWVCD (67 aa)). In terms of domain architecture, TSP type-1 spans 198–243 (NCLVQTTEWSACSKTCGMGISTRVTNDNASCRLEKQSRLCMVRPCE). The N-linked (GlcNAc...) asparagine glycan is linked to N225. The tract at residues 247 to 349 (EENIKKGKKC…YYRKMYGDMA (103 aa)) is heparin-binding. Disulfide bonds link C256–C293, C273–C307, C284–C323, C287–C325, and C292–C329. The region spanning 256-330 (CIRTPKISKP…KTCACHYNCP (75 aa)) is the CTCK domain.

Belongs to the CCN family. In terms of assembly, monomer. Interacts with TSKU. In terms of tissue distribution, expressed in bone marrow and thymic cells. Also expressed one of two Wilms tumors tested.

It localises to the secreted. The protein localises to the extracellular space. It is found in the extracellular matrix. Major connective tissue mitoattractant secreted by vascular endothelial cells. Promotes proliferation and differentiation of chondrocytes. Is involved in the stimulation of osteoblast differentiation and has a critical role in osteogenesis. Mediates heparin- and divalent cation-dependent cell adhesion in many cell types including fibroblasts, myofibroblasts, endothelial and epithelial cells. Enhances fibroblast growth factor-induced DNA synthesis. The protein is CCN family member 2 of Homo sapiens (Human).